A 337-amino-acid polypeptide reads, in one-letter code: Glyceraldehyde-3-phosphate dehydrogenase (337 aa).

Residues 11-12 (RI), Asp-33, and Lys-78 each bind NAD(+). Residues 149-151 (SCT), Thr-180, 209-210 (TG), and Arg-232 contribute to the D-glyceraldehyde 3-phosphate site. Cys-150 serves as the catalytic Nucleophile. Asn-314 provides a ligand contact to NAD(+).

Belongs to the glyceraldehyde-3-phosphate dehydrogenase family. As to quaternary structure, homotetramer.

It is found in the cytoplasm. It catalyses the reaction D-glyceraldehyde 3-phosphate + phosphate + NAD(+) = (2R)-3-phospho-glyceroyl phosphate + NADH + H(+). Its pathway is carbohydrate degradation; glycolysis; pyruvate from D-glyceraldehyde 3-phosphate: step 1/5. The protein is Glyceraldehyde-3-phosphate dehydrogenase (GPD) of Lyophyllum shimeji (Hon-shimeji).